We begin with the raw amino-acid sequence, 459 residues long: 3-carboxy-cis,cis-muconate cycloisomerase (459 aa).

The protein belongs to the class-II fumarase/aspartase family. In terms of assembly, homotetramer.

It localises to the cytoplasm. It carries out the reaction 2-(carboxymethyl)-5-oxo-2,5-dihydro-2-furoate = 3-carboxy-cis,cis-muconate + H(+). The protein operates within aromatic compound metabolism; beta-ketoadipate pathway; 5-oxo-4,5-dihydro-2-furylacetate from 3-carboxy-cis,cis-muconate: step 1/2. In terms of biological role, catalyzes an anti cycloisomerization. The sequence is that of 3-carboxy-cis,cis-muconate cycloisomerase (pcaB) from Pseudomonas aeruginosa (strain ATCC 15692 / DSM 22644 / CIP 104116 / JCM 14847 / LMG 12228 / 1C / PRS 101 / PAO1).